We begin with the raw amino-acid sequence, 84 residues long: MHLYLLLGALAVFSLVYDKKENGIVFYFLILVLVFVLISPAFISKNTESAANDLPSHKAKSVRKKLEIEQALDAILNKNTSSLD.

This is an uncharacterized protein from Orgyia pseudotsugata (Douglas-fir tussock moth).